The primary structure comprises 999 residues: Probable basic-leucine zipper transcription factor N (999 aa).

2 stretches are compositionally biased toward low complexity: residues 1–79 (MYQS…YQQQ) and 88–126 (NNVNINNNNNNNVNINSQNNVNNNNNNNNNNNNGNINNN). Positions 1-126 (MYQSIPQQGN…NNNNGNINNN (126 aa)) are disordered. Coiled coils occupy residues 148 to 198 (QQQQ…MVLM) and 232 to 282 (GIQQ…QQIS). The span at 286 to 302 (ESASPYYSTPIQSNTML) shows a compositional bias: polar residues. Disordered regions lie at residues 286–406 (ESAS…SQDQ), 450–533 (QQLH…PTIN), and 601–620 (EKQKTRRRASQNLASRNYRQ). A compositionally biased stretch (low complexity) spans 303-347 (SIPSSPGIPSSIPQLNNSNNINNNSNNNNNNNNNNNNNNINYNSN). Polar residues predominate over residues 348–406 (MASNFISQHSNNGSNTSSPVPQTTYLQNSGGNFNAYNGSNTNSPITPSSYLQPTTSQDQ). A coiled-coil region spans residues 423–451 (IQQQQKILQQQQQQQLLLQQQIQQQQQQQ). Residues 450–517 (QQLHQPQSPQ…IIQPTTIQPQ (68 aa)) are compositionally biased toward low complexity. Residues 601–664 (EKQKTRRRAS…KKLLHENNIL (64 aa)) form the bZIP domain. The basic motif stretch occupies residues 602 to 632 (KQKTRRRASQNLASRNYRQRKKQYVNEVEDR). Residues 636 to 643 (IVQENERL) form a leucine-zipper region. 3 disordered regions span residues 665-711 (KSGG…VVET), 779-807 (QSCPFEDPSEKQHSDPNSSPIGDMPSPYE), and 870-899 (VNNGGNTKSKKTAASTSTTTTTTSTSTTTT). Residues 682–692 (SEDEDEDDFDQ) show a composition bias toward acidic residues. Residues 921–950 (HLVQLSGLLDKLKENIDHENETLIQTYEKL) are a coiled coil.

Belongs to the bZIP family.

The protein resides in the nucleus. Functionally, probable transcriptional regulator. This chain is Probable basic-leucine zipper transcription factor N (bzpN), found in Dictyostelium discoideum (Social amoeba).